A 2497-amino-acid polypeptide reads, in one-letter code: Highly reducing polyketide synthase aurA (2497 aa).

One can recognise a Ketosynthase family 3 (KS3) domain in the interval 3–437 (PEPIAIIGSG…GTNSHAILES (435 aa)). Catalysis depends on for beta-ketoacyl synthase activity residues Cys175, His314, and His357. The malonyl-CoA:ACP transacylase (MAT) domain stretch occupies residues 575–896 (IFTGQGAQWP…ISTLSRGATG (322 aa)). The active-site For malonyltransferase activity is Ser669. The N-terminal hotdog fold stretch occupies residues 965 to 1095 (HELLGDLSEE…GQLVVTWGEM (131 aa)). The interval 965–1255 (HELLGDLSEE…EGVHVTPLMQ (291 aa)) is dehydratase (DH) domain. Residues 965–1259 (HELLGDLSEE…VTPLMQPTAS (295 aa)) form the PKS/mFAS DH domain. The active-site Proton acceptor; for dehydratase activity is His997. Residues 1110–1259 (MSVVDTDEFY…VTPLMQPTAS (150 aa)) form a C-terminal hotdog fold region. Asp1166 (proton donor; for dehydratase activity) is an active-site residue. Residues 1399 to 1594 (NLLTRFYDQE…TGFGGVQSIL (196 aa)) form a methyltransferase (CMet) domain region. Residues 2150–2294 (KTYLLVASRT…RRERNLVGSI (145 aa)) are ketoreductase (KR) domain. Residues 2409–2487 (EAAELVLIAL…DLANSATSKI (79 aa)) form the Carrier domain. Position 2447 is an O-(pantetheine 4'-phosphoryl)serine (Ser2447).

Pantetheine 4'-phosphate is required as a cofactor.

It participates in polyketide biosynthesis. In terms of biological role, highly reducing polyketide synthase (HR-PKS); part of the gene cluster that mediates the biosynthesis of aurovertins, fungal polyketides that exhibit potent inhibition of adenosine triphosphate synthase. Tha biosynthesis starts with the HR-PKS aurA that selects propionate as the starter unit; synthesizes a hexa-ene chain through the repeated functions of the KR and DH domains in the first six iterations; selectively introduces three alpha-methyl substitutions at C4, C6, and C16 using the S-adensylmethionine-dependent cMET; and shuts off KR and DH in the last three iterations to afford a 1,3,5-triketo portion that can undergo intramolecular cyclization to yield the alpha-pyrone intermediate. AurE may act as a cyclase and enhances the rate of pyrone formation and product release of aurA. The methyltransferase aurB then methylates the C17 hydroxyl group. C17 methylation is required to initiate epoxidation by the downstream monooxygenase aurC. The monooxygenase aurC and the epoxide hydrolase aurD can iteratively transform the terminal triene portion of the methylated precursor into the dioxabicyclo[3.2.1]octane scaffold of aurovertin E. Epoxidation modifications of the precursor occur in two separate steps; bis-epoxidation of the two terminal olefins takes place first, followed by another epoxidation that occurs at C7-C8 after tetrahydrofuran formation. The O-acyltransferase aurG converts aurovertin E to aurovertin A. This chain is Highly reducing polyketide synthase aurA, found in Calcarisporium arbuscula (Dendryphion arbuscula).